The following is a 393-amino-acid chain: Interleukin-1 receptor type 2 (393 aa).

Positions 1–13 (MFRLYVLVMGVSA) are cleaved as a signal peptide. Residues 14–347 (FTLQPAAHTG…RTTVKEPPPT (334 aa)) lie on the Extracellular side of the membrane. 3 disulfide bridges follow: Cys28–Cys116, Cys50–Cys108, and Cys152–Cys207. Ig-like C2-type domains are found at residues 29–120 (PVRG…DKVS), 134–221 (PFIS…YNIT), and 237–342 (PVII…TTVK). 3 N-linked (GlcNAc...) asparagine glycosylation sites follow: Asn66, Asn72, and Asn112. Asn219 and Asn277 each carry an N-linked (GlcNAc...) asparagine glycan. A disulfide bridge connects residues Cys258 and Cys326. Residues 348–368 (FSWGIVLAPLALAFLVLGGIW) form a helical membrane-spanning segment. Residues 369–393 (MHRRCKHRTGKADGLTVLRPHHQDF) are Cytoplasmic-facing.

Belongs to the interleukin-1 receptor family. In terms of assembly, forms a non-signaling receptor complex consisting of IL1R2 and IL1RAP. A soluble form (sIL1R2) can also be produced by proteolytic cleavage at the cell surface (shedding) involving a metalloproteinase.

The protein resides in the secreted. It localises to the cell membrane. Functionally, non-signaling receptor for IL1A, IL1B and IL1RN. Reduces IL1B activities. Serves as a decoy receptor by competitive binding to IL1B and preventing its binding to IL1R1. Also modulates cellular response through non-signaling association with IL1RAP after binding to IL1B. IL1R2 (membrane and secreted forms) preferentially binds IL1B and poorly IL1A and IL1RN. The secreted IL1R2 recruits secreted IL1RAP with high affinity; this complex formation may be the dominant mechanism for neutralization of IL1B by secreted/soluble receptors. This chain is Interleukin-1 receptor type 2 (IL1R2), found in Chlorocebus aethiops (Green monkey).